A 210-amino-acid chain; its full sequence is MAASKDRENFVYIAKLAEQAERYEEMVESMKNVANLDVELTVEERKKGVAILDFILRLGAITSALGAAATMATSDETLPFFTQFFQFEASYDSFSTFQFFVIAMAFVGGYLVLSLPFSIVTIIRPHAAGPRLFLIILDTVFLTLATSSAAAATAIVYLAHNGNQDSNWLAICNQFGDFCQEISGAVVASFVAVVLFVLLIVMCAVALRNH.

The Cytoplasmic segment spans residues methionine 1 to glycine 48. Residues valine 49–alanine 69 form a helical membrane-spanning segment. Residues threonine 70–glutamine 98 are Extracellular-facing. The chain crosses the membrane as a helical span at residues phenylalanine 99–isoleucine 119. At valine 120 to arginine 131 the chain is on the cytoplasmic side. The chain crosses the membrane as a helical span at residues leucine 132–alanine 152. Residues threonine 153–glycine 184 lie on the Extracellular side of the membrane. Residues alanine 185–valine 205 traverse the membrane as a helical segment. Over alanine 206 to histidine 210 the chain is Cytoplasmic.

It belongs to the Casparian strip membrane proteins (CASP) family. In terms of assembly, homodimer and heterodimers.

It is found in the cell membrane. Regulates membrane-cell wall junctions and localized cell wall deposition. Required for establishment of the Casparian strip membrane domain (CSD) and the subsequent formation of Casparian strips, a cell wall modification of the root endodermis that determines an apoplastic barrier between the intraorganismal apoplasm and the extraorganismal apoplasm and prevents lateral diffusion. The protein is Casparian strip membrane protein 4 of Glycine max (Soybean).